We begin with the raw amino-acid sequence, 154 residues long: Small ribosomal subunit protein uS19B (154 aa).

Ser63 bears the Phosphoserine mark.

It belongs to the universal ribosomal protein uS19 family. In terms of assembly, component of the small ribosomal subunit (SSU). Mature yeast ribosomes consist of a small (40S) and a large (60S) subunit. The 40S small subunit contains 1 molecule of ribosomal RNA (18S rRNA) and at least 33 different proteins. The large 60S subunit contains 3 rRNA molecules (25S, 5.8S and 5S rRNA) and at least 46 different proteins.

The protein localises to the cytoplasm. Its subcellular location is the nucleus. It is found in the nucleolus. Component of the ribosome, a large ribonucleoprotein complex responsible for the synthesis of proteins in the cell. The small ribosomal subunit (SSU) binds messenger RNAs (mRNAs) and translates the encoded message by selecting cognate aminoacyl-transfer RNA (tRNA) molecules. The large subunit (LSU) contains the ribosomal catalytic site termed the peptidyl transferase center (PTC), which catalyzes the formation of peptide bonds, thereby polymerizing the amino acids delivered by tRNAs into a polypeptide chain. The nascent polypeptides leave the ribosome through a tunnel in the LSU and interact with protein factors that function in enzymatic processing, targeting, and the membrane insertion of nascent chains at the exit of the ribosomal tunnel. uS19 is involved in the nuclear export of the small ribosomal subunit precursor. Has a role in the late stage of the assembly of pre-40S particles within the nucleus and controls their export to the cytoplasm. The chain is Small ribosomal subunit protein uS19B (rps1502) from Schizosaccharomyces pombe (strain 972 / ATCC 24843) (Fission yeast).